Consider the following 652-residue polypeptide: 1,4-alpha-glucan branching enzyme GlgB (652 aa).

Asp322 acts as the Nucleophile in catalysis. Glu373 (proton donor) is an active-site residue.

The protein belongs to the glycosyl hydrolase 13 family. GlgB subfamily. In terms of assembly, monomer.

It catalyses the reaction Transfers a segment of a (1-&gt;4)-alpha-D-glucan chain to a primary hydroxy group in a similar glucan chain.. It functions in the pathway glycan biosynthesis; glycogen biosynthesis. In terms of biological role, catalyzes the formation of the alpha-1,6-glucosidic linkages in glycogen by scission of a 1,4-alpha-linked oligosaccharide from growing alpha-1,4-glucan chains and the subsequent attachment of the oligosaccharide to the alpha-1,6 position. The chain is 1,4-alpha-glucan branching enzyme GlgB from Deinococcus geothermalis (strain DSM 11300 / CIP 105573 / AG-3a).